Here is a 100-residue protein sequence, read N- to C-terminus: Co-chaperonin GroES (100 aa).

This sequence belongs to the GroES chaperonin family. In terms of assembly, heptamer of 7 subunits arranged in a ring. Interacts with the chaperonin GroEL.

Its subcellular location is the cytoplasm. Its function is as follows. Together with the chaperonin GroEL, plays an essential role in assisting protein folding. The GroEL-GroES system forms a nano-cage that allows encapsulation of the non-native substrate proteins and provides a physical environment optimized to promote and accelerate protein folding. GroES binds to the apical surface of the GroEL ring, thereby capping the opening of the GroEL channel. The sequence is that of Co-chaperonin GroES from Mycobacterium leprae (strain Br4923).